Reading from the N-terminus, the 697-residue chain is Colicin-D (697 aa).

The TonB box motif lies at 17 to 24 (HSMVVWPS).

Belongs to the cloacin colicin family.

Functionally, colicins are polypeptide toxins produced by and active against E.coli and closely related bacteria. Its function is as follows. Colicin D inhibits protein synthesis. The chain is Colicin-D (cda) from Escherichia coli.